A 353-amino-acid polypeptide reads, in one-letter code: Photosystem II D2 protein (353 aa).

T2 carries the N-acetylthreonine modification. Position 2 is a phosphothreonine (T2). The helical transmembrane segment at 41–61 threads the bilayer; it reads CAYFSLGGWFTGTTFVTSWYT. H118 lines the chlorophyll a pocket. The chain crosses the membrane as a helical span at residues 125 to 141; the sequence is GFMLRQFELARSVQLRP. Q130 and N143 together coordinate pheophytin a. Residues 153–166 traverse the membrane as a helical segment; that stretch reads VFVSVFLIYPLGQS. Residue H198 participates in chlorophyll a binding. A helical membrane pass occupies residues 208 to 228; it reads AALLCAIHGATVENTLFEDGD. A plastoquinone-binding residues include H215 and F262. A Fe cation-binding site is contributed by H215. A Fe cation-binding site is contributed by H269. A helical transmembrane segment spans residues 279–295; the sequence is GLWMSAIGVVGLALNLR.

Belongs to the reaction center PufL/M/PsbA/D family. In terms of assembly, PSII is composed of 1 copy each of membrane proteins PsbA, PsbB, PsbC, PsbD, PsbE, PsbF, PsbH, PsbI, PsbJ, PsbK, PsbL, PsbM, PsbT, PsbX, PsbY, PsbZ, Psb30/Ycf12, at least 3 peripheral proteins of the oxygen-evolving complex and a large number of cofactors. It forms dimeric complexes. Requires The D1/D2 heterodimer binds P680, chlorophylls that are the primary electron donor of PSII, and subsequent electron acceptors. It shares a non-heme iron and each subunit binds pheophytin, quinone, additional chlorophylls, carotenoids and lipids. There is also a Cl(-1) ion associated with D1 and D2, which is required for oxygen evolution. The PSII complex binds additional chlorophylls, carotenoids and specific lipids. as cofactor.

The protein resides in the plastid. It localises to the chloroplast thylakoid membrane. It carries out the reaction 2 a plastoquinone + 4 hnu + 2 H2O = 2 a plastoquinol + O2. In terms of biological role, photosystem II (PSII) is a light-driven water:plastoquinone oxidoreductase that uses light energy to abstract electrons from H(2)O, generating O(2) and a proton gradient subsequently used for ATP formation. It consists of a core antenna complex that captures photons, and an electron transfer chain that converts photonic excitation into a charge separation. The D1/D2 (PsbA/PsbD) reaction center heterodimer binds P680, the primary electron donor of PSII as well as several subsequent electron acceptors. D2 is needed for assembly of a stable PSII complex. This is Photosystem II D2 protein from Physcomitrium patens (Spreading-leaved earth moss).